The following is a 95-amino-acid chain: Aspartyl/glutamyl-tRNA(Asn/Gln) amidotransferase subunit C (95 aa).

Belongs to the GatC family. As to quaternary structure, heterotrimer of A, B and C subunits.

The enzyme catalyses L-glutamyl-tRNA(Gln) + L-glutamine + ATP + H2O = L-glutaminyl-tRNA(Gln) + L-glutamate + ADP + phosphate + H(+). It carries out the reaction L-aspartyl-tRNA(Asn) + L-glutamine + ATP + H2O = L-asparaginyl-tRNA(Asn) + L-glutamate + ADP + phosphate + 2 H(+). Functionally, allows the formation of correctly charged Asn-tRNA(Asn) or Gln-tRNA(Gln) through the transamidation of misacylated Asp-tRNA(Asn) or Glu-tRNA(Gln) in organisms which lack either or both of asparaginyl-tRNA or glutaminyl-tRNA synthetases. The reaction takes place in the presence of glutamine and ATP through an activated phospho-Asp-tRNA(Asn) or phospho-Glu-tRNA(Gln). The protein is Aspartyl/glutamyl-tRNA(Asn/Gln) amidotransferase subunit C of Ruegeria sp. (strain TM1040) (Silicibacter sp.).